Reading from the N-terminus, the 137-residue chain is DNA-binding protein H-NS (137 aa).

Residues 13-65 (TLRAQARECTLETLEEMLEKLEVVVNERREEESAAAAEVEERTRKLQQYREML) adopt a coiled-coil conformation. The DNA-binding element occupies 112 to 117 (QGRTPA).

It belongs to the histone-like protein H-NS family. In terms of assembly, homodimer that oligomerizes on DNA into higher-order complexes that form bridges between disparate regions of DNA compacting it. Interacts with Hha, YdgT and StpA.

The protein localises to the cytoplasm. The protein resides in the nucleoid. In terms of biological role, a DNA-binding protein implicated in transcriptional repression and chromosome organization and compaction. Binds AT-rich DNA, repressing its transcription; about 754/4438 tested genes (15%) bind to H-NS, 70% of these are AT-rich and correspond to horizontally transferred geness (HTG), thus playing a central role in silencing foreign genes. This offers the selective advantage of silencing foreign DNA. Binds nucleation sites in AT-rich DNA and bridges them, forming higher-order nucleoprotein complexes and condensing the chromosome. A subset of genes are repressed by H-NS in association with Hha and/or YdgT. The chain is DNA-binding protein H-NS (hns) from Salmonella typhimurium (strain 14028s / SGSC 2262).